A 215-amino-acid polypeptide reads, in one-letter code: Cytochrome b6 (215 aa).

The chain crosses the membrane as a helical span at residues 32–52 (IFYCIGGITFTCFLVQVATGF). Residue Cys-35 participates in heme c binding. The heme b site is built by His-86 and His-100. 3 helical membrane-spanning segments follow: residues 90–110 (ASMMVLMMILHVCRVYLTGGF), 116–136 (LTWVTGVIMAVCTVSFGVTGY), and 186–206 (LHTFVLPLATAVFMLMHFLMI). Residues His-187 and His-202 each contribute to the heme b site.

This sequence belongs to the cytochrome b family. PetB subfamily. In terms of assembly, the 4 large subunits of the cytochrome b6-f complex are cytochrome b6, subunit IV (17 kDa polypeptide, PetD), cytochrome f and the Rieske protein, while the 4 small subunits are PetG, PetL, PetM and PetN. The complex functions as a dimer. It depends on heme b as a cofactor. Heme c serves as cofactor.

It is found in the plastid. The protein resides in the chloroplast thylakoid membrane. In terms of biological role, component of the cytochrome b6-f complex, which mediates electron transfer between photosystem II (PSII) and photosystem I (PSI), cyclic electron flow around PSI, and state transitions. The sequence is that of Cytochrome b6 from Chlorella vulgaris (Green alga).